The sequence spans 355 residues: Methionine import ATP-binding protein MetN (355 aa).

Positions Leu-8–Ile-250 constitute an ABC transporter domain. ATP is bound at residue Gly-42–Ser-49.

It belongs to the ABC transporter superfamily. Methionine importer (TC 3.A.1.24) family. As to quaternary structure, the complex is composed of two ATP-binding proteins (MetN), two transmembrane proteins (MetI) and a solute-binding protein (MetQ).

It is found in the cell membrane. It carries out the reaction L-methionine(out) + ATP + H2O = L-methionine(in) + ADP + phosphate + H(+). The enzyme catalyses D-methionine(out) + ATP + H2O = D-methionine(in) + ADP + phosphate + H(+). Its function is as follows. Part of the ABC transporter complex MetNIQ involved in methionine import. Responsible for energy coupling to the transport system. The sequence is that of Methionine import ATP-binding protein MetN from Streptococcus thermophilus (strain ATCC BAA-250 / LMG 18311).